The chain runs to 339 residues: Methionyl-tRNA formyltransferase (339 aa).

A (6S)-5,6,7,8-tetrahydrofolate-binding site is contributed by 110–113 (SLLP).

This sequence belongs to the Fmt family.

The catalysed reaction is L-methionyl-tRNA(fMet) + (6R)-10-formyltetrahydrofolate = N-formyl-L-methionyl-tRNA(fMet) + (6S)-5,6,7,8-tetrahydrofolate + H(+). Its function is as follows. Attaches a formyl group to the free amino group of methionyl-tRNA(fMet). The formyl group appears to play a dual role in the initiator identity of N-formylmethionyl-tRNA by promoting its recognition by IF2 and preventing the misappropriation of this tRNA by the elongation apparatus. The protein is Methionyl-tRNA formyltransferase of Prochlorococcus marinus (strain MIT 9211).